We begin with the raw amino-acid sequence, 513 residues long: Na(+)/H(+) antiporter NhaB (513 aa).

Helical transmembrane passes span 23 to 43, 52 to 72, 97 to 117, 120 to 140, 144 to 164, 202 to 222, 238 to 258, 303 to 323, 348 to 368, 391 to 411, 447 to 467, and 475 to 495; these read LALIIFLIVNPLIFLISPFVA, IFTLAMALKCYPLLPGGLLAI, LLLMFMVAGIYFMKQLLLFIF, LLLSIRSKMLLSLSFCVAAAF, FLDALTVVAVVISVAVGFYGI, LMMHAGVGTALGGVMTMVGEP, FFLRMSPVTVPVLICGLLTCL, AIIGVWLVTALALHLAEVGLI, TESLPFTALLTVFFSVVAVII, LFYIFNGLLSSISDNVFVGTI, ATPNGQAAFLFLLTSALAPLI, and VWMALPYTLVLTLVGLLCVEF.

Belongs to the NhaB Na(+)/H(+) (TC 2.A.34) antiporter family.

Its subcellular location is the cell inner membrane. The catalysed reaction is 2 Na(+)(in) + 3 H(+)(out) = 2 Na(+)(out) + 3 H(+)(in). In terms of biological role, na(+)/H(+) antiporter that extrudes sodium in exchange for external protons. In Escherichia coli O6:H1 (strain CFT073 / ATCC 700928 / UPEC), this protein is Na(+)/H(+) antiporter NhaB.